Consider the following 511-residue polypeptide: Arginine-containing cyclodipeptide synthase eshA (511 aa).

Residues 413 to 417 (DDSAE) carry the Conserved DDXXE motif motif.

This sequence belongs to the arginine-containing cyclodipeptide synthase family.

It catalyses the reaction L-arginyl-tRNA(Arg) + L-leucyl-tRNA(Leu) = cyclo(L-arginyl-L-leucyl) + tRNA(Arg) + tRNA(Leu) + 2 H(+). It functions in the pathway secondary metabolite biosynthesis. In terms of biological role, arginine-containing cyclodipeptide synthase; part of the cluster that mediates the biosynthesis of a highly modified cyclo-arginine-leucine dipeptide (cRW). Within the pathway, eshA acts as the scaffold-generating enzyme and is responsible for formation of the cyclo-Arg-Leu diketopiperazine (cRL) from L-arginyl-tRNA(Arg) + L-Leucyl-tRNA(Leu). Additional enzymes from the cluster then further modify the cyclo-Arg-Leu diketopiperazine (cRW) scaffold. The protein is Arginine-containing cyclodipeptide synthase eshA of Penicillium shearii (Eupenicillium shearii).